The sequence spans 483 residues: Wax ester synthase/diacylglycerol acyltransferase 10 (483 aa).

The Cytoplasmic segment spans residues 1–203; that stretch reads MTKEEVEEEP…SINAVYYAVR (203 aa). Histidine 143 (proton acceptor) is an active-site residue. A helical transmembrane segment spans residues 204–222; the sequence is LIWNTIVDLLLLWATSLFF. Over 223 to 483 the chain is Lumenal; it reads KDTETPISEG…MKDTLSGKSD (261 aa). N-linked (GlcNAc...) asparagine glycans are attached at residues asparagine 394 and asparagine 399.

This sequence in the N-terminal section; belongs to the long-chain O-acyltransferase family. Mostly expressed in roots.

The protein resides in the cell membrane. The protein localises to the endoplasmic reticulum membrane. It catalyses the reaction an acyl-CoA + a 1,2-diacyl-sn-glycerol = a triacyl-sn-glycerol + CoA. It carries out the reaction a long chain fatty alcohol + a fatty acyl-CoA = a wax ester + CoA. It functions in the pathway glycerolipid metabolism; triacylglycerol biosynthesis. The protein operates within lipid metabolism. Bifunctional wax ester synthase/diacylglycerol acyltransferase. Involved in cuticular wax biosynthesis. The protein is Wax ester synthase/diacylglycerol acyltransferase 10 of Arabidopsis thaliana (Mouse-ear cress).